The following is a 469-amino-acid chain: Cyclin-dependent kinase 14 (469 aa).

Residues Ser-24, Ser-78, and Ser-95 each carry the phosphoserine modification. Positions Phe-103–Asp-133 are disordered. Phosphoserine is present on Ser-134. Positions Tyr-135–Phe-419 constitute a Protein kinase domain. ATP contacts are provided by residues Leu-141–Val-149 and Lys-164. Residue Asp-256 is the Proton acceptor of the active site. Residues Glu-449 to His-469 are disordered. A compositionally biased stretch (polar residues) spans Lys-456–His-469.

It belongs to the protein kinase superfamily. CMGC Ser/Thr protein kinase family. CDC2/CDKX subfamily. In terms of assembly, found in a complex with LRP6, CCNY and CAPRIN2 during G2/M stage; CAPRIN2 functions as a scaffold for the complex by binding to CCNY via its N terminus and to CDK14 via its C terminus. Interacts with CCNY; CCNY mediates its recruitment to the plasma membrane and promotes phosphorylation of LRP6. Interacts with CCDN3 and CDKN1A. Interacts with SEPT8. Interacts with 14-3-3 proteina YWHAB, YWHAE, YWHAH and YWHAQ. Highly expressed in brain, pancreas, kidney, heart, testis and ovary. Also detected at lower levels in other tissues except in spleen and thymus where expression is barely detected.

It localises to the cell membrane. It is found in the cytoplasm. The protein resides in the nucleus. It catalyses the reaction L-seryl-[protein] + ATP = O-phospho-L-seryl-[protein] + ADP + H(+). It carries out the reaction L-threonyl-[protein] + ATP = O-phospho-L-threonyl-[protein] + ADP + H(+). With respect to regulation, serine/threonine-protein kinase activity is promoted by associated cyclins CCDN3 and CCNY and repressed by CDKN1A. In terms of biological role, serine/threonine-protein kinase involved in the control of the eukaryotic cell cycle, whose activity is controlled by an associated cyclin. Acts as a cell-cycle regulator of Wnt signaling pathway during G2/M phase by mediating the phosphorylation of LRP6 at 'Ser-1490', leading to the activation of the Wnt signaling pathway. Acts as a regulator of cell cycle progression and cell proliferation via its interaction with CCDN3. Phosphorylates RB1 in vitro, however the relevance of such result remains to be confirmed in vivo. May also play a role in meiosis, neuron differentiation and may indirectly act as a negative regulator of insulin-responsive glucose transport. This Homo sapiens (Human) protein is Cyclin-dependent kinase 14 (CDK14).